Here is an 89-residue protein sequence, read N- to C-terminus: Small ribosomal subunit protein uS17 (89 aa).

It belongs to the universal ribosomal protein uS17 family. Part of the 30S ribosomal subunit.

One of the primary rRNA binding proteins, it binds specifically to the 5'-end of 16S ribosomal RNA. The sequence is that of Small ribosomal subunit protein uS17 from Xanthomonas axonopodis pv. citri (strain 306).